The sequence spans 545 residues: Dual specificity calcium/calmodulin-dependent 3',5'-cyclic nucleotide phosphodiesterase 1A (545 aa).

2 calmodulin-binding regions span residues 24 to 44 and 114 to 137; these read TEKM…QLEK and EKPK…MYRK. A PDEase domain is found at 142–522; it reads VGLTYPAAVI…ERWKELAAQG (381 aa). Residue His-219 is the Proton donor of the active site. Zn(2+) contacts are provided by His-223, His-259, Asp-260, and Asp-366. Residue Asp-260 coordinates Mg(2+). A disordered region spans residues 526–545; it reads LHKNSEELGNTEEKHADTRP.

This sequence belongs to the cyclic nucleotide phosphodiesterase family. PDE1 subfamily. Homodimer. Interacts with YWHAZ. The cofactor is Zn(2+). Mg(2+) is required as a cofactor. As to expression, expressed in brain, kidney and testis.

The protein localises to the cell projection. Its subcellular location is the cilium. It is found in the flagellum. It catalyses the reaction a nucleoside 3',5'-cyclic phosphate + H2O = a nucleoside 5'-phosphate + H(+). The enzyme catalyses 3',5'-cyclic GMP + H2O = GMP + H(+). The catalysed reaction is 3',5'-cyclic AMP + H2O = AMP + H(+). Type I PDE are activated by the binding of calmodulin in the presence of Ca(2+). With respect to regulation, activated by the binding of calmodulin in the presence of Ca(2+). Functionally, calcium/calmodulin-dependent cyclic nucleotide phosphodiesterase with a dual specificity for the second messengers cGMP and cAMP, which are key regulators of many important physiological processes. Has a higher efficiency with cGMP compared to cAMP. The chain is Dual specificity calcium/calmodulin-dependent 3',5'-cyclic nucleotide phosphodiesterase 1A from Mus musculus (Mouse).